Reading from the N-terminus, the 24-residue chain is Aldehyde dehydrogenase gamma chain (24 aa).

As to quaternary structure, heterotrimer composed of an alpha, a beta and a gamma chain. Requires [2Fe-2S] cluster as cofactor.

It carries out the reaction an aldehyde + a quinone + H2O = a quinol + a carboxylate + H(+). The sequence is that of Aldehyde dehydrogenase gamma chain from Comamonas testosteroni (Pseudomonas testosteroni).